The following is a 574-amino-acid chain: Pre-mRNA-processing protein 45 (574 aa).

Disordered regions lie at residues 1–46 (MAAL…WKPK), 203–234 (PPRFKHKKIPRGPAEPPPPVLQSPPRAATAQD), 350–406 (ETGI…SEMR), 478–503 (AGSSRNDESFGGGTEEGIKEEMSKDR), and 549–574 (MDAARRGGKRTAEDRDEERRKRARDE). Pro residues-rich tracts occupy residues 24 to 33 (APLPTTPGPQ) and 215 to 224 (PAEPPPPVLQ). Acidic residues predominate over residues 363 to 377 (GSEEESDEEEEDEEA). 3 stretches are compositionally biased toward basic and acidic residues: residues 378–397 (IRERNIVREEKRREREKEMR), 493–503 (EGIKEEMSKDR), and 558–574 (RTAEDRDEERRKRARDE).

Belongs to the SNW family. In terms of assembly, associated with the spliceosome.

It localises to the nucleus. Functionally, involved in pre-mRNA splicing. The polypeptide is Pre-mRNA-processing protein 45 (PRP45) (Cryptococcus neoformans var. neoformans serotype D (strain JEC21 / ATCC MYA-565) (Filobasidiella neoformans)).